The primary structure comprises 374 residues: Queuine tRNA-ribosyltransferase (374 aa).

Asp91 functions as the Proton acceptor in the catalytic mechanism. Substrate contacts are provided by residues 91-95 (DSGGY), Asp145, Gln189, and Gly216. The tract at residues 247–253 (GVGTVPD) is RNA binding. Asp266 (nucleophile) is an active-site residue. Residues 271–275 (TRNAR) form an RNA binding; important for wobble base 34 recognition region. Zn(2+)-binding residues include Cys304, Cys306, Cys309, and His335.

This sequence belongs to the queuine tRNA-ribosyltransferase family. In terms of assembly, homodimer. Within each dimer, one monomer is responsible for RNA recognition and catalysis, while the other monomer binds to the replacement base PreQ1. The cofactor is Zn(2+).

It carries out the reaction 7-aminomethyl-7-carbaguanine + guanosine(34) in tRNA = 7-aminomethyl-7-carbaguanosine(34) in tRNA + guanine. Its pathway is tRNA modification; tRNA-queuosine biosynthesis. Its function is as follows. Catalyzes the base-exchange of a guanine (G) residue with the queuine precursor 7-aminomethyl-7-deazaguanine (PreQ1) at position 34 (anticodon wobble position) in tRNAs with GU(N) anticodons (tRNA-Asp, -Asn, -His and -Tyr). Catalysis occurs through a double-displacement mechanism. The nucleophile active site attacks the C1' of nucleotide 34 to detach the guanine base from the RNA, forming a covalent enzyme-RNA intermediate. The proton acceptor active site deprotonates the incoming PreQ1, allowing a nucleophilic attack on the C1' of the ribose to form the product. After dissociation, two additional enzymatic reactions on the tRNA convert PreQ1 to queuine (Q), resulting in the hypermodified nucleoside queuosine (7-(((4,5-cis-dihydroxy-2-cyclopenten-1-yl)amino)methyl)-7-deazaguanosine). The chain is Queuine tRNA-ribosyltransferase from Leptospira interrogans serogroup Icterohaemorrhagiae serovar Lai (strain 56601).